Here is an 829-residue protein sequence, read N- to C-terminus: MKEPVDCRLSTPAGFSGTVPPPGRTKAARPGTIPVRRSRGSASALPGKIYGWSRRQRDRFAMLLSSFDAALAAYSGVVVSRGTRSLPPSLRLFRAMTRKWLSVTARGNGVEFAIASAKEFSAACRAGWISGTVPDHFFMKWLPEPVRRKSGLWAQLSFIGRSLPEGGDRHEIEALANHKAALSSSFEVPADVLTSLRNYSEDWARRHLAADPDPSLLCEPCTGNSATFERTRREGGFAQSITDLVSSSPTDNLPPLESMPFGPTQGQALPVHVLEVSLSRYHNGSDPKGRVSVVRERGHKVRVVSAMETHELVLGHAARRRLFKGLRRERRLRDTLKGDFEATTKAFVGCAGTVISSDMKSASDLIPLSVASAIVDGLEASGRLLPVEIAGLRACTGPQHLVYPDGSEITTRRGILMGLPTTWAILNLMHLWCWDSADRQYRLEGHPFRATVRSDCRVCGDDLIGVGPDSLLRSYDRNLGLVGMILSPGKHFRSNRRGVFLERLLEFQTRKTVYEHAVIYRKVGHRRVPVDRSHIPVVTRVTVLNTIPLKGLVRASVLGRDDPPVWWAAAVAESSLLSDYPRKKIFAAARTLRPGLSRQFRRLGIPPFLPRELGGAGLVGPSDRVDAPAFHRKAISSLVWGSDATAAYSFIRMWQGFEGHPWKTAASQETDTWFADYKVTRPGKMYPDRYGFLDGESLRTKSTMLNSAVYETFLGPDPDATHYPSLRIVASRLAKVRKDLVNRWPSVKPVGKDLGTILEAFEESKLCTLWVTPYDASGYFDDSLLLMDESVYQRRFRQLVIAGLMREGRMGDLLFPNWLPPSTVVSGFP.

Residues 1-39 (MKEPVDCRLSTPAGFSGTVPPPGRTKAARPGTIPVRRSR) are disordered.

Forms a ribonucleoprotein complex with the 20S RNA, where a single polymerase molecule binds to a single viral RNA genome. Since the viral RNA is not encapsidated, ribonucleoprotein complex formation appears to be the strategy to survive in the host as persistent virus.

Its subcellular location is the host cytoplasm. It catalyses the reaction RNA(n) + a ribonucleoside 5'-triphosphate = RNA(n+1) + diphosphate. Its function is as follows. RNA-directed RNA polymerase that replicates the viral (+) and (-) genome. This Saccharomyces cerevisiae (Baker's yeast) protein is RNA-directed RNA polymerase.